The sequence spans 429 residues: MKKQRNLRSMAAQAVEQVVEQGQSLSNILPPLQQKVSDKDKALLQELCFGVLRTLSQLDWLINKLMARPMTGKQRTVHYLIMVGLYQLLYTRIPPHAALAETVEGAVAIKRPQLKGLINGVLRQFQRQQEELLAEFNASDARYLHPSWLLKRLQKAYPEQWQSIVEANNQRPPMWLRVNRTHHSRDSWLALLDEAGMKGFPHADYPDAVRLETPAPVHALPGFEDGWVTVQDASAQGCMTWLAPQNGEHILDLCAAPGGKTTHILEVAPEAQVVAVDIDEQRLSRVYDNLKRLGMKATVKQGDGRYPSQWCGKQQFDRILLDAPCSATGVIRRHPDIKWLRRDRDIPELAQLQSEILDAIWPHLKSGGTLVYATCSVLPEENSLQIKAFLQRTADAELCETGTPEQPGKQNLPGAEEGDGFFYAKLIKK.

S-adenosyl-L-methionine-binding positions include 254–260 (CAAPGGK), Asp277, Asp303, and Asp322. The active-site Nucleophile is Cys375.

The protein belongs to the class I-like SAM-binding methyltransferase superfamily. RsmB/NOP family.

It is found in the cytoplasm. The enzyme catalyses cytidine(967) in 16S rRNA + S-adenosyl-L-methionine = 5-methylcytidine(967) in 16S rRNA + S-adenosyl-L-homocysteine + H(+). Functionally, specifically methylates the cytosine at position 967 (m5C967) of 16S rRNA. The protein is Ribosomal RNA small subunit methyltransferase B of Escherichia coli O127:H6 (strain E2348/69 / EPEC).